The chain runs to 521 residues: MNTLSSARSVAIYVGPVRSSRSASVLAHEQAKSSITEEHKTYDEIPRPNKFKFMRAFMPGGEFQNASITEYTSAMRKRYGDIYVMPGMFGRKDWVTTFNTKDIEMVFRNEGIWPRRDGLDSIVYFREHVRPDVYGEVQGLVASQNEAWGKLRSAINPIFMQPRGLRMYYEPLSNINNEFIERIKEIRDPKTLEVPEDFTDEISRLVFESLGLVAFDRQMGLIRKNRDNSDALTLFQTSRDIFRLTFKLDIQPSMWKIISTPTYRKMKRTLNDSLNVAQKMLKENQDALEKRRQAGEKINSNSMLERLMEIDPKVAVIMSLDILFAGVDATATLLSAVLLCLSKHPDKQAKLREELLSIMPTKDSLLNEENMKDMPYLRAVIKETLRYYPNGLGTMRTCQNDVILSGYRVPKGTTVLLGSNVLMKEATYYPRPDEFLPERWLRDPETGKKMQVSPFTFLPFGFGPRMCIGKRVVDLEMETTVAKLIRNFHVEFNRDASRPFKTMFVMEPAITFPFKFTDIEQ.

The N-terminal 19 residues, 1 to 19 (MNTLSSARSVAIYVGPVRS), are a transit peptide targeting the mitochondrion. Cys467 lines the heme pocket.

The protein belongs to the cytochrome P450 family. Heme is required as a cofactor.

The protein localises to the mitochondrion membrane. The polypeptide is Probable cytochrome P450 12d1 proximal, mitochondrial (Cyp12d1-p) (Drosophila melanogaster (Fruit fly)).